A 592-amino-acid polypeptide reads, in one-letter code: 3-hydroxy-3-methylglutaryl-coenzyme A reductase 1 (592 aa).

The tract at residues 1 to 45 (MDLRRRPPKPPVTNNNNSNGSFRSYQPRTSDDDHRRRATTIAPPP) is disordered. Over residues 12–28 (VTNNNNSNGSFRSYQPR) the composition is skewed to polar residues. N-linked (GlcNAc...) asparagine glycosylation is found at Asn16 and Asn19. 2 helical membrane-spanning segments follow: residues 47–69 (ASDALPLPLYLTNAVFFTLFFSV) and 97–117 (AIIALIASFIYLLGFFGIDFV). The linker stretch occupies residues 118 to 171 (QSFISRASGDAWDLADTIDDDDHRLVTCSPPTPIVSVAKLPNPEPIVTESLPEE). Positions 172 to 592 (DEEIVKSVID…GATTTTTTTT (421 aa)) are catalytic. The active-site Charge relay system is Glu265. An N-linked (GlcNAc...) asparagine glycan is attached at Asn329. Catalysis depends on charge relay system residues Lys397 and Asp473. The Proton donor role is filled by His571. N-linked (GlcNAc...) asparagine glycosylation occurs at Asn575. The residue at position 577 (Ser577) is a Phosphoserine.

This sequence belongs to the HMG-CoA reductase family. Interacts (via N-terminus) with B''ALPHA and B''BETA. Post-translationally, inactivated by phosphorylation at Ser-577 by KIN10 activated form. Probably also phosphorylated at additional sites. Found in all tissues. Isoform Short is expressed at low levels specifically in flowers. Expressed in both the tapetum and microspores.

The protein localises to the endoplasmic reticulum membrane. The catalysed reaction is (R)-mevalonate + 2 NADP(+) + CoA = (3S)-3-hydroxy-3-methylglutaryl-CoA + 2 NADPH + 2 H(+). It participates in metabolic intermediate biosynthesis; (R)-mevalonate biosynthesis; (R)-mevalonate from acetyl-CoA: step 3/3. Regulated at the post-translational level in response to alterations of sphingolipid and sterol biosynthetic pathways. Negatively regulated by a PP2A-dependent dephosphorylation occurring at a site different than Ser-577. Completely inhibited by mevinolin (IC(50) = 12.5 nM). Reversibly inactivated by phosphorylation at Ser-577 by spinach or Brassica oleracea HMGR kinases in a cell-free system. Down-regulated by KIN10 through its phosphorylation at Ser-577. In terms of biological role, catalyzes the synthesis of mevalonate, the specific precursor of all isoprenoid compounds present in plants. The polypeptide is 3-hydroxy-3-methylglutaryl-coenzyme A reductase 1 (Arabidopsis thaliana (Mouse-ear cress)).